The chain runs to 242 residues: Mannose-P-dolichol utilization defect 1 protein homolog (242 aa).

The 59-residue stretch at 37–95 folds into the PQ-loop 1 domain; the sequence is LSRGLGFAITLGSILLFVPQILKIQAARSAQGISAASQLLALVGAIGTASYSYRSGFVF. 7 helical membrane-spanning segments follow: residues 40 to 60, 68 to 88, 98 to 118, 120 to 140, 148 to 168, 180 to 200, and 207 to 227; these read GLGF…ILKI, GISA…ASYS, WGDS…IFLF, GQTM…YGVV, TLTA…LLQI, LSLI…FTSV, and LLIV…AQFF. In terms of domain architecture, PQ-loop 2 spans 152–202; sequence VQTAGIPIVVVSKLLQISQNYRAQSTGQLSLISVFLQFAGTLARVFTSVQD.

It belongs to the MPDU1 (TC 2.A.43.3) family.

The protein resides in the membrane. The protein is Mannose-P-dolichol utilization defect 1 protein homolog of Caenorhabditis elegans.